The following is a 263-amino-acid chain: Palmitoyltransferase ZDHHC22 (263 aa).

Over 1–9 the chain is Cytoplasmic; it reads MLALRLLNV. A helical membrane pass occupies residues 10–30; the sequence is VAPAYFLCISLVTFVLQLFLF. At 31-47 the chain is on the lumenal side; that stretch reads LPSMREDPTATPLFSPA. A helical transmembrane segment spans residues 48–68; that stretch reads VLHGALFLFLSANALGNYILV. Topologically, residues 69-125 are cytoplasmic; sequence VQNSPDDLGACQGTSSQRPQRPPPSTHFCRVCARVTLRHDHHCFFTGNCIGSRNMRN. Residues 91 to 131 enclose the DHHC domain; the sequence is PPSTHFCRVCARVTLRHDHHCFFTGNCIGSRNMRNFILFCL. Residue cysteine 111 is the S-palmitoyl cysteine intermediate of the active site. The next 2 membrane-spanning stretches (helical) occupy residues 126 to 146 and 147 to 167; these read FILF…AGVA and YISA…TLLP. The Cytoplasmic segment spans residues 168–182; that stretch reads TSISQFFSGAVLGSD. The helical transmembrane segment at 183-203 threads the bilayer; the sequence is MFVILMLYLWFAVGLACAGFC. Topologically, residues 204–263 are lumenal; that stretch reads CHQLLLILRGQTRYQVRKGVAVRARPWRKNLQEVFGKRWLLGLLVPMFNVGTESSKQQDK.

This sequence belongs to the DHHC palmitoyltransferase family. Interacts with CNN3.

The protein localises to the endoplasmic reticulum membrane. It localises to the golgi apparatus membrane. It carries out the reaction L-cysteinyl-[protein] + hexadecanoyl-CoA = S-hexadecanoyl-L-cysteinyl-[protein] + CoA. Its function is as follows. Palmitoyltransferase that could catalyze the addition of palmitate onto various protein substrates and be involved in a variety of cellular processes. Catalyzes the palmitoylation of KCNMA1, regulating localization of KCNMA1 to the plasma membrane. Might also mediate palmitoylation of CNN3. This Rattus norvegicus (Rat) protein is Palmitoyltransferase ZDHHC22.